The sequence spans 161 residues: Thy-1 membrane glycoprotein (161 aa).

The signal sequence occupies residues Met1–Gly19. Position 20 is a pyrrolidone carboxylic acid (Gln20). The Ig-like V-type domain maps to Gln20–Lys126. Intrachain disulfides connect Cys28–Cys130 and Cys38–Cys104. N-linked (GlcNAc...) asparagine glycosylation is found at Asn42 and Asn79. Ser82 carries the phosphoserine modification. N-linked (GlcNAc...) asparagine glycosylation is present at Asn119. The GPI-anchor amidated cysteine; alternate moiety is linked to residue Cys130. The propeptide at Glu131 to Leu161 is removed in mature form. Asn139 carries N-linked (GlcNAc...) asparagine glycosylation.

Its subcellular location is the cell membrane. Functionally, may play a role in cell-cell or cell-ligand interactions during synaptogenesis and other events in the brain. This Macaca mulatta (Rhesus macaque) protein is Thy-1 membrane glycoprotein (THY1).